Reading from the N-terminus, the 548-residue chain is MALLNNQDEIVRPVANFSPSLWGDRFHSFSLDNQVADKYAQQIETLKEQTRSLLSDAACGTTLAEKLNLIDIVERLGLAYHFEKQIEDMLDQIYKADPNFEAHDLNTLSLQFRILRQHGYNISQKIFSRFQDANGKFKESLSNDIKGLLNLYEASHVRTHGEDILEEALAFSTAHLESAAPHLKSPLSKQVTHALEQSLHKSIPRVETRYFISIYEEEEFKNDVLLRFAKLDYNLLQMLHKQELSEVSRWWKDLDFVTTLPYARDRAVECYFWTMGVYAEPQYSQARVMLAKTIAMISIVDDTFDAYGIVKELEVYTDAIQRWDISQMDRLPEYMKVSFKALLDLYEDYEKELSKDGRSDVVQYAKERMKEIVRNYFVEAKWFIEGYMPPVSEYLSNALATSTYYLLTTTSYLGVKSATKEDFEWLAKNPKILEANVTLCRVVDDIATYEVEKGRGQIATGIECYMRDYGVSTQVAMDKFQEMAEIAWKDVNEGILRPTPVSTEILTRILNLARIIDVTYKHNQDGYTHPEKVLKPHIIALLVDSIEI.

Mg(2+) is bound by residues Asp-301, Asp-305, Asp-444, Thr-448, and Glu-452. Residues 301–305 (DDTFD) carry the DDXXD motif motif.

The protein belongs to the terpene synthase family. Tpsa subfamily. It depends on Mg(2+) as a cofactor. As to expression, expressed in stem and leaf trichomes. Detected in roots, fruits and flowers.

The protein resides in the cytoplasm. It catalyses the reaction (2E,6E)-farnesyl diphosphate = viridiflorene + diphosphate. It participates in secondary metabolite biosynthesis; terpenoid biosynthesis. Its function is as follows. Sesquiterpene synthase involved in the production of viridiflorene from (E,E)-farnesyl diphosphate. Can also use (Z,Z)-FPP to make several unidentified sesquiterpenes. In Solanum lycopersicum (Tomato), this protein is Viridiflorene synthase.